The chain runs to 454 residues: tRNA modification GTPase MnmE (454 aa).

Arg23, Glu80, and Lys120 together coordinate (6S)-5-formyl-5,6,7,8-tetrahydrofolate. Residues 216–377 (GMKVVIAGRP…LRNNLKQSMG (162 aa)) form the TrmE-type G domain. Asn226 serves as a coordination point for K(+). GTP-binding positions include 226-231 (NAGKSS), 245-251 (TDIAGTT), 270-273 (DTAG), 335-338 (NKAD), and 358-360 (SAR). Ser230 is a Mg(2+) binding site. Thr245, Ile247, and Thr250 together coordinate K(+). Mg(2+) is bound at residue Thr251. Lys454 is a binding site for (6S)-5-formyl-5,6,7,8-tetrahydrofolate.

The protein belongs to the TRAFAC class TrmE-Era-EngA-EngB-Septin-like GTPase superfamily. TrmE GTPase family. Homodimer. Heterotetramer of two MnmE and two MnmG subunits. Requires K(+) as cofactor.

The protein localises to the cytoplasm. Functionally, exhibits a very high intrinsic GTPase hydrolysis rate. Involved in the addition of a carboxymethylaminomethyl (cmnm) group at the wobble position (U34) of certain tRNAs, forming tRNA-cmnm(5)s(2)U34. The chain is tRNA modification GTPase MnmE from Salmonella paratyphi A (strain AKU_12601).